Reading from the N-terminus, the 31-residue chain is Aspartate aminotransferase, cytoplasmic (31 aa).

It belongs to the class-I pyridoxal-phosphate-dependent aminotransferase family. As to quaternary structure, homodimer. The cofactor is pyridoxal 5'-phosphate.

Its subcellular location is the cytoplasm. The enzyme catalyses L-aspartate + 2-oxoglutarate = oxaloacetate + L-glutamate. The catalysed reaction is L-cysteine + 2-oxoglutarate = 2-oxo-3-sulfanylpropanoate + L-glutamate. It carries out the reaction (2S)-2-aminobutanoate + 2-oxoglutarate = 2-oxobutanoate + L-glutamate. It catalyses the reaction 3-sulfino-L-alanine + 2-oxoglutarate = 3-sulfinopyruvate + L-glutamate. Its function is as follows. Biosynthesis of L-glutamate from L-aspartate or L-cysteine. Important regulator of levels of glutamate, the major excitatory neurotransmitter of the vertebrate central nervous system. Acts as a scavenger of glutamate in brain neuroprotection. The aspartate aminotransferase activity is involved in hepatic glucose synthesis during development and in adipocyte glyceroneogenesis. Using L-cysteine as substrate, regulates levels of mercaptopyruvate, an important source of hydrogen sulfide. Mercaptopyruvate is converted into H(2)S via the action of 3-mercaptopyruvate sulfurtransferase (3MST). Hydrogen sulfide is an important synaptic modulator and neuroprotectant in the brain. This chain is Aspartate aminotransferase, cytoplasmic, found in Oryctolagus cuniculus (Rabbit).